Reading from the N-terminus, the 260-residue chain is MSTTAAIQASNISVTFGHRTILDKIDIEIFSGQVTALLGPNGAGKSTLLKILSGEISSTGKMAYFGVPQALWQPNELAKHLAILPQQSTLSFPFIAQEVVELGALPLNLSHQQVSEVALHYMQQTDISDRANNLYPALSGGEKQRLHLARVLTQLHHSGDKKILMLDEPTSALDLAHQHNTLRIARSLAHQEQCAVVVVLHDLNLAAQYADRMVMLHNGKLVCDAPPWEALNAERIEQVYGYSSLVAAHPTMDFPMVYPI.

Positions 7-243 constitute an ABC transporter domain; sequence IQASNISVTF…ERIEQVYGYS (237 aa). 39–46 lines the ATP pocket; it reads GPNGAGKS.

This sequence belongs to the ABC transporter superfamily. Heme (hemin) importer (TC 3.A.1.14.5) family. The complex is composed of two ATP-binding proteins (HmuV), two transmembrane proteins (HmuU) and a solute-binding protein (HmuT).

The protein resides in the cell inner membrane. Part of the ABC transporter complex HmuTUV involved in hemin import. Responsible for energy coupling to the transport system. The chain is Hemin import ATP-binding protein HmuV from Vibrio anguillarum (strain ATCC 68554 / 775) (Listonella anguillarum).